A 533-amino-acid chain; its full sequence is Putative amidase C550.07 (533 aa).

Catalysis depends on charge relay system residues lysine 132 and serine 207. Catalysis depends on serine 231, which acts as the Acyl-ester intermediate.

Belongs to the amidase family.

It is found in the cytoplasm. It localises to the nucleus. The catalysed reaction is a monocarboxylic acid amide + H2O = a monocarboxylate + NH4(+). The sequence is that of Putative amidase C550.07 from Schizosaccharomyces pombe (strain 972 / ATCC 24843) (Fission yeast).